A 131-amino-acid chain; its full sequence is Lysosomal enzyme trafficking factor (131 aa).

A run of 2 helical transmembrane segments spans residues 8–28 (MGWIGVSLYLFVSAAAFYYVF) and 66–86 (LPFWLWATLFLIPYFQVFLFL).

It belongs to the LYSET family.

The protein resides in the golgi apparatus membrane. Its function is as follows. Required for mannose-6-phosphate-dependent trafficking of lysosomal enzymes. LYSET bridges GlcNAc-1-phosphate transferase (GNPTAB), to the membrane-bound transcription factor site-1 protease (MBTPS1), thus allowing proteolytic activation of the GNPTAB. GNPTAB is involved in the regulation of M6P-dependent Golgi-to-lysosome trafficking of lysosomal enzymes. LYSET is thus an essential factor for maturation and delivery of lysosomal hydrolases. This Xenopus laevis (African clawed frog) protein is Lysosomal enzyme trafficking factor (lyset-a).